The following is a 282-amino-acid chain: NH(3)-dependent NAD(+) synthetase (282 aa).

51 to 58 (GISGGVDS) contacts ATP. Asp57 serves as a coordination point for Mg(2+). Arg148 serves as a coordination point for deamido-NAD(+). Thr168 contributes to the ATP binding site. Residue Glu173 coordinates Mg(2+). The deamido-NAD(+) site is built by Lys181 and Asp188. ATP is bound by residues Lys197 and Thr219. Residue 268–269 (HK) participates in deamido-NAD(+) binding.

Belongs to the NAD synthetase family. In terms of assembly, homodimer.

It carries out the reaction deamido-NAD(+) + NH4(+) + ATP = AMP + diphosphate + NAD(+) + H(+). Its pathway is cofactor biosynthesis; NAD(+) biosynthesis; NAD(+) from deamido-NAD(+) (ammonia route): step 1/1. In terms of biological role, catalyzes the ATP-dependent amidation of deamido-NAD to form NAD. Uses ammonia as a nitrogen source. The chain is NH(3)-dependent NAD(+) synthetase from Burkholderia cenocepacia (strain ATCC BAA-245 / DSM 16553 / LMG 16656 / NCTC 13227 / J2315 / CF5610) (Burkholderia cepacia (strain J2315)).